The following is a 622-amino-acid chain: Low affinity potassium transport system protein Kup (622 aa).

12 helical membrane passes run 9 to 29, 46 to 66, 101 to 121, 137 to 157, 165 to 185, 213 to 233, 247 to 267, 276 to 296, 337 to 357, 363 to 383, 395 to 415, and 416 to 436; these read LSAV…TSPL, PDVV…VVSV, ILVV…VITP, PALD…LFVI, VGKL…LLGL, VSFF…ALYA, WFTV…ALLL, PFFL…ATLA, IYIP…IIGF, LAAA…ILFC, FLVA…FSAN, and VLKL…MFII.

This sequence belongs to the HAK/KUP transporter (TC 2.A.72) family.

The protein resides in the cell inner membrane. The enzyme catalyses K(+)(in) + H(+)(in) = K(+)(out) + H(+)(out). Functionally, responsible for the low-affinity transport of potassium into the cell. Likely operates as a K(+):H(+) symporter. This Yersinia pseudotuberculosis serotype O:1b (strain IP 31758) protein is Low affinity potassium transport system protein Kup.